The chain runs to 611 residues: Alpha-1,2-mannosyltransferase ALG9 (611 aa).

Over residues 1 to 10 the composition is skewed to basic residues; that stretch reads MASRGARQRL. The interval 1–23 is disordered; that stretch reads MASRGARQRLKGSGASSGDTAPA. Topologically, residues 1–135 are lumenal; the sequence is MASRGARQRL…FHARILQTNK (135 aa). N-linked (GlcNAc...) asparagine glycosylation is present at asparagine 77. Residues 136–156 traverse the membrane as a helical segment; the sequence is ILVFYFLRCLLAFVSCICELY. Residues 157–171 are Cytoplasmic-facing; that stretch reads FYKAVCKKFGLHVSR. The chain crosses the membrane as a helical span at residues 172–192; it reads MMLAFLVLSTGMFCSSSAFLP. Residues 193–213 lie on the Lumenal side of the membrane; that stretch reads SSFCMYTTLIAMTGWYMDKTS. The helical transmembrane segment at 214 to 234 threads the bilayer; the sequence is IAVLGVAAGAILGWPFSAALG. Over 235–249 the chain is Cytoplasmic; that stretch reads LPIAFDLLVMKHRWK. Residues 250–270 form a helical membrane-spanning segment; it reads SFFHWSLMALILFLVPVVVID. At 271–304 the chain is on the lumenal side; the sequence is SYYYGKLVIAPLNIVLYNVFTPHGPDLYGTEPWY. A helical transmembrane segment spans residues 305–325; that stretch reads FYLINGFLNFNVAFALALLVL. Residues 326–342 lie on the Cytoplasmic side of the membrane; the sequence is PLTSLMEYLLQRFHVQN. Residues 343-363 form a helical membrane-spanning segment; that stretch reads LGHPYWLTLAPMYIWFIIFFI. Over 364–370 the chain is Lumenal; that stretch reads QPHKEER. A helical transmembrane segment spans residues 371-391; that stretch reads FLFPVYPLICLCGAVALSALQ. At 392 to 405 the chain is on the cytoplasmic side; the sequence is KCYHFVFQRYRLEH. Residues 406-426 traverse the membrane as a helical segment; sequence YTVTSNWLALGTVFLFGLLSF. Residues 427–611 are Lumenal-facing; sequence SRSVALFRGY…AKQIRKKSGG (185 aa). Asparagine 593 is a glycosylation site (N-linked (GlcNAc...) asparagine).

This sequence belongs to the glycosyltransferase 22 family. As to expression, ubiquitously expressed; with highest levels in heart, liver and pancreas.

The protein resides in the endoplasmic reticulum membrane. The enzyme catalyses an alpha-D-Man-(1-&gt;2)-alpha-D-Man-(1-&gt;2)-alpha-D-Man-(1-&gt;3)-[alpha-D-Man-(1-&gt;3)-alpha-D-Man-(1-&gt;6)]-beta-D-Man-(1-&gt;4)-beta-D-GlcNAc-(1-&gt;4)-alpha-D-GlcNAc-diphospho-di-trans,poly-cis-dolichol + a di-trans,poly-cis-dolichyl beta-D-mannosyl phosphate = an alpha-D-Man-(1-&gt;2)-alpha-D-Man-(1-&gt;2)-alpha-D-Man-(1-&gt;3)-[alpha-D-Man-(1-&gt;2)-alpha-D-Man-(1-&gt;3)-alpha-D-Man-(1-&gt;6)]-beta-D-Man-(1-&gt;4)-beta-D-GlcNAc-(1-&gt;4)-alpha-D-GlcNAc-diphospho-di-trans,poly-cis-dolichol + a di-trans,poly-cis-dolichyl phosphate + H(+). The catalysed reaction is an alpha-D-Man-(1-&gt;2)-alpha-D-Man-(1-&gt;2)-alpha-D-Man-(1-&gt;3)-[alpha-D-Man-(1-&gt;2)-alpha-D-Man-(1-&gt;3)-[alpha-D-Man-(1-&gt;6)]-alpha-D-Man-(1-&gt;6)]-beta-D-Man-(1-&gt;4)-beta-D-GlcNAc-(1-&gt;4)-alpha-D-GlcNAc-diphospho-di-trans,poly-cis-dolichol + a di-trans,poly-cis-dolichyl beta-D-mannosyl phosphate = an alpha-D-Man-(1-&gt;2)-alpha-D-Man-(1-&gt;2)-alpha-D-Man-(1-&gt;3)-[alpha-D-Man-(1-&gt;2)-alpha-D-Man-(1-&gt;3)-[alpha-D-Man-(1-&gt;2)-alpha-D-Man-(1-&gt;6)]-alpha-D-Man-(1-&gt;6)]-beta-D-Man-(1-&gt;4)-beta-D-GlcNAc-(1-&gt;4)-alpha-D-GlcNAc-diphospho-di-trans,poly-cis-dolichol + a di-trans,poly-cis-dolichyl phosphate + H(+). It participates in protein modification; protein glycosylation. Functionally, mannosyltransferase that operates in the biosynthetic pathway of dolichol-linked oligosaccharides, the glycan precursors employed in protein asparagine (N)-glycosylation. The assembly of dolichol-linked oligosaccharides begins on the cytosolic side of the endoplasmic reticulum membrane and finishes in its lumen. The sequential addition of sugars to dolichol pyrophosphate produces dolichol-linked oligosaccharides containing fourteen sugars, including two GlcNAcs, nine mannoses and three glucoses. Once assembled, the oligosaccharide is transferred from the lipid to nascent proteins by oligosaccharyltransferases. In the lumen of the endoplasmic reticulum, catalyzes the addition of the seventh and ninth alpha-1,2-linked mannose residues to Man(6)GlcNAc(2)-PP-dolichol and Man(8)GlcNAc(2)-PP-dolichol respectively. This is Alpha-1,2-mannosyltransferase ALG9 from Homo sapiens (Human).